The sequence spans 228 residues: LOB domain-containing protein 30 (228 aa).

Residues 16-118 form the LOB domain; it reads GPCGACKFLR…TELSYLQAHL (103 aa). The interval 188-228 is disordered; sequence SNMGGGGELQALAREFIHGGQMPAQPSPGTSGSASSVIKRE. Positions 214 to 228 are enriched in polar residues; the sequence is SPGTSGSASSVIKRE.

It belongs to the LOB domain-containing protein family. Expressed in roots, stems, leaves and flowers. Expressed in vascular tissues of hypocotyls, leaves, roots, developing floral organs and siliques.

In terms of biological role, involved in the positive regulation of tracheary element (TE) differentiation. Involved in a positive feedback loop that maintains or promotes NAC030/VND7 expression that regulates TE differentiation-related genes. The chain is LOB domain-containing protein 30 (LBD30) from Arabidopsis thaliana (Mouse-ear cress).